A 347-amino-acid chain; its full sequence is NADH-ubiquinone oxidoreductase chain 2 (347 aa).

10 helical membrane passes run 3 to 23, 25 to 45, 66 to 86, 111 to 131, 149 to 169, 178 to 198, 201 to 221, 237 to 257, 274 to 294, and 325 to 345; these read PPILIAILATVMTGTMIVMLS, HWLLIWIGFEMNMLAIIPILM, ASMLLMMGVTINLLYSGQWMI, FHFWVPEVTQGISLSSGMILL, INTDLMTLVALASVLVGGWGG, IMAYSSIAHMGWMAAIIIYNP, MFLNLSLYILMTLSTFMLFML, IPLIASTILTLMLSLGGLPPL, DMIVVPTLMAITALLNLYFYM, and LLPPLIITSTMLLPIMPMMSI.

This sequence belongs to the complex I subunit 2 family. As to quaternary structure, core subunit of respiratory chain NADH dehydrogenase (Complex I) which is composed of 45 different subunits. Interacts with TMEM242.

The protein localises to the mitochondrion inner membrane. It catalyses the reaction a ubiquinone + NADH + 5 H(+)(in) = a ubiquinol + NAD(+) + 4 H(+)(out). Functionally, core subunit of the mitochondrial membrane respiratory chain NADH dehydrogenase (Complex I) which catalyzes electron transfer from NADH through the respiratory chain, using ubiquinone as an electron acceptor. Essential for the catalytic activity and assembly of complex I. The protein is NADH-ubiquinone oxidoreductase chain 2 of Vulpes vulpes (Red fox).